Consider the following 1392-residue polypeptide: DNA-directed RNA polymerase subunit beta' (1392 aa).

Residues cysteine 70, cysteine 72, cysteine 85, and cysteine 88 each coordinate Zn(2+). The Mg(2+) site is built by aspartate 460, aspartate 462, and aspartate 464. Zn(2+)-binding residues include cysteine 810, cysteine 884, cysteine 891, and cysteine 894.

Belongs to the RNA polymerase beta' chain family. In terms of assembly, the RNAP catalytic core consists of 2 alpha, 1 beta, 1 beta' and 1 omega subunit. When a sigma factor is associated with the core the holoenzyme is formed, which can initiate transcription. The cofactor is Mg(2+). Zn(2+) is required as a cofactor.

It catalyses the reaction RNA(n) + a ribonucleoside 5'-triphosphate = RNA(n+1) + diphosphate. Functionally, DNA-dependent RNA polymerase catalyzes the transcription of DNA into RNA using the four ribonucleoside triphosphates as substrates. This chain is DNA-directed RNA polymerase subunit beta', found in Geobacter metallireducens (strain ATCC 53774 / DSM 7210 / GS-15).